Reading from the N-terminus, the 331-residue chain is Beta-ketoacyl-[acyl-carrier-protein] synthase III (331 aa).

Active-site residues include Cys113 and His253. Residues 254–258 (QANTR) are ACP-binding. Residue Asn283 is part of the active site.

It belongs to the thiolase-like superfamily. FabH family. As to quaternary structure, homodimer.

The protein localises to the cytoplasm. It catalyses the reaction malonyl-[ACP] + acetyl-CoA + H(+) = 3-oxobutanoyl-[ACP] + CO2 + CoA. The protein operates within lipid metabolism; fatty acid biosynthesis. Functionally, catalyzes the condensation reaction of fatty acid synthesis by the addition to an acyl acceptor of two carbons from malonyl-ACP. Catalyzes the first condensation reaction which initiates fatty acid synthesis and may therefore play a role in governing the total rate of fatty acid production. Possesses both acetoacetyl-ACP synthase and acetyl transacylase activities. Its substrate specificity determines the biosynthesis of branched-chain and/or straight-chain of fatty acids. The protein is Beta-ketoacyl-[acyl-carrier-protein] synthase III of Desulfitobacterium hafniense (strain Y51).